The chain runs to 234 residues: MSKAPFLSRAAFARVTNPLARGLLRIGLTPDAVTIIGTTASVAGALVLFPMGKLFPGACVVWFFVLFDMLDGAMARERGGGTRFGAVLDAACDRISDGAVFGGLLWWVAFGMRDRLLVVATLICLVTSQVISYIKARAEASGLRGDGGIIERPERLIIVLAGAGVSDFPFIAWPPALPVAMWLLAVTSVITCGQRLYTVWTSPGATDLLVPSAPVRDDDAQGHPRSGDPGKTQR.

The next 2 membrane-spanning stretches (helical) occupy residues 28 to 48 (LTPDAVTIIGTTASVAGALVL) and 54 to 70 (LFPGACVVWFFVLFDML). 31–34 (DAVT) is an a CDP-1,2-diacyl-sn-glycerol binding site. Mg(2+) contacts are provided by aspartate 68 and aspartate 71. 3 residues coordinate a CDP-1,2-diacyl-sn-glycerol: glycine 72, arginine 76, and threonine 82. Positions 89 and 93 each coordinate Mg(2+). 4 helical membrane passes run 91–110 (ACDRISDGAVFGGLLWWVAF), 116–134 (LLVVATLICLVTSQVISYI), 155–173 (RLIIVLAGAGVSDFPFIAW), and 179–197 (VAMWLLAVTSVITCGQRLY). Aspartate 93 (proton acceptor) is an active-site residue. The tract at residues 211–234 (PSAPVRDDDAQGHPRSGDPGKTQR) is disordered. Positions 215-228 (VRDDDAQGHPRSGD) are enriched in basic and acidic residues.

It belongs to the CDP-alcohol phosphatidyltransferase class-I family. As to quaternary structure, homodimer. It depends on Mg(2+) as a cofactor.

The protein resides in the cell membrane. The catalysed reaction is a CDP-1,2-diacyl-sn-glycerol + 1D-myo-inositol 3-phosphate = a 1,2-diacyl-sn-glycero-3-phospho-(1D-myo-inositol-3-phosphate) + CMP + H(+). It catalyses the reaction 1,2-di-(9Z-octadecenoyl)-sn-glycero-3-cytidine-5'-diphosphate + 1D-myo-inositol 3-phosphate = 1,2-di-(9Z-octadecenoyl)-sn-glycero-3-phospho-(1D-myo-inositol-3-phosphate) + CMP + H(+). It participates in phospholipid metabolism; phosphatidylinositol phosphate biosynthesis. In terms of biological role, catalyzes the conjugation of the 1'-hydroxyl group of D-myo-inositol-3-phosphate (also named L-myo-inositol-1-phosphate) with a lipid tail of cytidine diphosphate diacylglycerol (CDP-DAG), forming phosphatidylinositol phosphate (PIP) and CMP. PIP is a precursor of phosphatidylinositol (PI) which is an essential lipid for mycobacteria required for formation of their cell wall. This chain is Phosphatidylinositol phosphate synthase, found in Mycobacterium marinum (strain ATCC BAA-535 / M).